We begin with the raw amino-acid sequence, 345 residues long: Molybdate/tungstate import ATP-binding protein WtpC (345 aa).

In terms of domain architecture, ABC transporter spans 2 to 231 (LKVESISKDY…PKSEEVARFL (230 aa)). Position 33 to 40 (33 to 40 (GPSGSGKT)) interacts with ATP. The Mop domain occupies 280 to 345 (KTSARNVFKA…FKASAIHVFP (66 aa)).

This sequence belongs to the ABC transporter superfamily. Sulfate/tungstate importer (TC 3.A.1.6) family. The complex is composed of two ATP-binding proteins (WtpC), two transmembrane proteins (WtpB) and a solute-binding protein (WtpA).

The protein resides in the cell membrane. The catalysed reaction is tungstate(in) + ATP + H2O = tungstate(out) + ADP + phosphate + H(+). Its function is as follows. Part of the ABC transporter complex WtpABC involved in molybdate/tungstate import. Responsible for energy coupling to the transport system. The polypeptide is Molybdate/tungstate import ATP-binding protein WtpC (wtpC) (Pyrococcus horikoshii (strain ATCC 700860 / DSM 12428 / JCM 9974 / NBRC 100139 / OT-3)).